The sequence spans 277 residues: General transcription factor IIF subunit 2 (277 aa).

Belongs to the TFIIF beta subunit family. As to quaternary structure, heterodimer of an alpha and a beta subunit.

It is found in the nucleus. TFIIF is a general transcription initiation factor that binds to RNA polymerase II and helps to recruit it to the initiation complex in collaboration with TFIIB. This chain is General transcription factor IIF subunit 2 (TfIIFbeta), found in Drosophila melanogaster (Fruit fly).